We begin with the raw amino-acid sequence, 158 residues long: Copper transporter 2 (158 aa).

The tract at residues 1 to 20 is disordered; the sequence is MDHDHMHDMPPPSPSSSSMS. The next 2 membrane-spanning stretches (helical) occupy residues 53–73 and 104–124; these read GMYA…EWLA and YLVM…AIAG.

The protein belongs to the copper transporter (Ctr) (TC 1.A.56) family. SLC31A subfamily. As to expression, highly expressed in leaves and at lower levels in roots, stems and flowers.

It localises to the membrane. In terms of biological role, involved in the transport of copper. The sequence is that of Copper transporter 2 (COPT2) from Arabidopsis thaliana (Mouse-ear cress).